Here is a 344-residue protein sequence, read N- to C-terminus: Methionine import ATP-binding protein MetN 1 (344 aa).

Positions 2-241 (IELRNLSQRF…PHHEVTRALI (240 aa)) constitute an ABC transporter domain. Position 38 to 45 (38 to 45 (GRSGAGKS)) interacts with ATP.

It belongs to the ABC transporter superfamily. Methionine importer (TC 3.A.1.24) family. The complex is composed of two ATP-binding proteins (MetN), two transmembrane proteins (MetI) and a solute-binding protein (MetQ).

It localises to the cell inner membrane. It carries out the reaction L-methionine(out) + ATP + H2O = L-methionine(in) + ADP + phosphate + H(+). The enzyme catalyses D-methionine(out) + ATP + H2O = D-methionine(in) + ADP + phosphate + H(+). Its function is as follows. Part of the ABC transporter complex MetNIQ involved in methionine import. Responsible for energy coupling to the transport system. This chain is Methionine import ATP-binding protein MetN 1, found in Burkholderia lata (strain ATCC 17760 / DSM 23089 / LMG 22485 / NCIMB 9086 / R18194 / 383).